A 201-amino-acid chain; its full sequence is Dephospho-CoA kinase (201 aa).

One can recognise a DPCK domain in the interval 10 to 201 (LIGLTGGIAT…PQIIKAWHHR (192 aa)). 18 to 23 (ATGKST) contacts ATP.

Belongs to the CoaE family.

Its subcellular location is the cytoplasm. The catalysed reaction is 3'-dephospho-CoA + ATP = ADP + CoA + H(+). It participates in cofactor biosynthesis; coenzyme A biosynthesis; CoA from (R)-pantothenate: step 5/5. Its function is as follows. Catalyzes the phosphorylation of the 3'-hydroxyl group of dephosphocoenzyme A to form coenzyme A. This is Dephospho-CoA kinase from Synechocystis sp. (strain ATCC 27184 / PCC 6803 / Kazusa).